Reading from the N-terminus, the 346-residue chain is NADH-ubiquinone oxidoreductase chain 2 (346 aa).

The next 11 membrane-spanning stretches (helical) occupy residues Pro-3–Ser-23, His-25–Met-45, Tyr-59–Met-79, Ile-96–Pro-116, Ile-122–Leu-142, Ile-149–Gly-169, Ile-178–Pro-198, Leu-200–Ile-220, Ala-237–Leu-257, Ser-274–Met-294, and Ile-322–Leu-342.

Belongs to the complex I subunit 2 family. As to quaternary structure, core subunit of respiratory chain NADH dehydrogenase (Complex I) which is composed of 45 different subunits. Interacts with TMEM242.

Its subcellular location is the mitochondrion inner membrane. The enzyme catalyses a ubiquinone + NADH + 5 H(+)(in) = a ubiquinol + NAD(+) + 4 H(+)(out). Functionally, core subunit of the mitochondrial membrane respiratory chain NADH dehydrogenase (Complex I) which catalyzes electron transfer from NADH through the respiratory chain, using ubiquinone as an electron acceptor. Essential for the catalytic activity and assembly of complex I. This chain is NADH-ubiquinone oxidoreductase chain 2, found in Equus asinus (Donkey).